A 543-amino-acid polypeptide reads, in one-letter code: UPF0324 membrane protein RB9488 (543 aa).

Over residues 1-22 (MNSNTPSSDNSSPDNVSPDTSD) the composition is skewed to low complexity. A disordered region spans residues 1–41 (MNSNTPSSDNSSPDNVSPDTSDMASAGDDSALATPPPRPSL). The chain crosses the membrane as a helical span at residues 51–73 (WWAIWCAALLLLIAFAAVWIGQP). Positions 91–120 (VETAPENAGPSAEAENEAIETENTAPAENA) are disordered. 11 consecutive transmembrane segments (helical) span residues 160–182 (ISSS…AFAN), 189–211 (AGAF…WMSG), 221–243 (EYAL…PDFL), 270–292 (LALG…ITTY), 307–329 (NMVI…AAAC), 336–358 (LSLS…PAVI), 368–390 (GGAW…AVLG), 403–422 (IQNI…WVTF), 437–459 (IWYR…SILY), 479–496 (TLRG…GLET), and 511–533 (LVLY…YLMF).

This sequence belongs to the UPF0324 family.

The protein resides in the cell membrane. The protein is UPF0324 membrane protein RB9488 of Rhodopirellula baltica (strain DSM 10527 / NCIMB 13988 / SH1).